Consider the following 219-residue polypeptide: ADP-sugar pyrophosphatase (219 aa).

The residue at position 1 (methionine 1) is an N-acetylmethionine. Phosphoserine is present on residues serine 3 and serine 10. A substrate-binding site is contributed by tryptophan 28. Residue lysine 42 forms a Glycyl lysine isopeptide (Lys-Gly) (interchain with G-Cter in SUMO2) linkage. A Phosphothreonine modification is found at threonine 45. Residues 46–47 and arginine 51 each bind substrate; that span reads WE. The 141-residue stretch at 57-197 folds into the Nudix hydrolase domain; that stretch reads QTADGVAVIP…EEHLTVDARV (141 aa). Tyrosine 74 bears the Phosphotyrosine mark. Arginine 84 is a binding site for substrate. Alanine 96 lines the Mg(2+) pocket. Positions 97-118 match the Nudix box motif; the sequence is GLIDDGETPEAAALRELEEETG. Leucine 98 provides a ligand contact to substrate. Residues glutamate 112 and glutamate 116 each contribute to the Mg(2+) site. Aspartate 133 is a binding site for substrate. A Mg(2+)-binding site is contributed by glutamate 166. N6-acetyllysine occurs at positions 210 and 218.

The protein belongs to the Nudix hydrolase family. As to quaternary structure, homodimer. Interacts with PARG. The cofactor is Mg(2+). Post-translationally, phosphorylation at Thr-45 is required for homodimer stability; dephosphorylation results in destabilization of the homodimer. Dephosphorylation at Thr-45 promotes the ATP-synthesis activity. Widely expressed. Most abundant in liver.

It localises to the nucleus. It catalyses the reaction D-ribose 5-phosphate + ATP + H(+) = ADP-D-ribose + diphosphate. The catalysed reaction is ADP-D-ribose + H2O = D-ribose 5-phosphate + AMP + 2 H(+). The enzyme catalyses 8-oxo-dGDP + H2O = 8-oxo-dGMP + phosphate + H(+). Functionally, enzyme that can either act as an ADP-sugar pyrophosphatase in absence of diphosphate or catalyze the synthesis of ATP in presence of diphosphate. In absence of diphosphate, hydrolyzes with similar activities various modified nucleoside diphosphates such as ADP-ribose, ADP-mannose, ADP-glucose, 8-oxo-GDP and 8-oxo-dGDP. Can also hydrolyze other nucleotide sugars with low activity. In presence of diphosphate, mediates the synthesis of ATP in the nucleus by catalyzing the conversion of ADP-ribose to ATP and ribose 5-phosphate. Nuclear ATP synthesis takes place when dephosphorylated at Thr-45. Nuclear ATP generation is required for extensive chromatin remodeling events that are energy-consuming. Does not play a role in U8 snoRNA decapping activity. Binds U8 snoRNA. This chain is ADP-sugar pyrophosphatase (NUDT5), found in Homo sapiens (Human).